We begin with the raw amino-acid sequence, 130 residues long: Small ribosomal subunit protein uS11 (130 aa).

Residues 108–130 are disordered; the sequence is IEDVTPIPHDGTGRPGGKRGRRV.

It belongs to the universal ribosomal protein uS11 family. Part of the 30S ribosomal subunit.

Located on the platform of the 30S subunit. The polypeptide is Small ribosomal subunit protein uS11 (Methanothermobacter thermautotrophicus (strain ATCC 29096 / DSM 1053 / JCM 10044 / NBRC 100330 / Delta H) (Methanobacterium thermoautotrophicum)).